Reading from the N-terminus, the 2211-residue chain is Nonribosomal peptide synthetase 13 (2211 aa).

The segment at 76–475 (TYAELDSLSD…IEHHLQLTLP (400 aa)) is adenylation 1. In terms of domain architecture, Carrier 1 spans 594-671 (PPSTPKEATI…EQSKRAGLIQ (78 aa)). The residue at position 631 (Ser-631) is an O-(pantetheine 4'-phosphoryl)serine. Residues 710 to 975 (EDIYPCTALQ…IATVPTRIRV (266 aa)) are condensation 1. The adenylation 2 stretch occupies residues 1169–1563 (TYRELWAHSS…LGAVEASVMR (395 aa)). The Carrier 2 domain occupies 1677–1756 (PMSDDNERRL…RSRHLITEQA (80 aa)). At Ser-1714 the chain carries O-(pantetheine 4'-phosphoryl)serine. Residues 1814-2069 (HFQFDLSGAV…CTNYIPYRLS (256 aa)) form a condensation 2 region.

Belongs to the NRP synthetase family.

It carries out the reaction L-proline + L-tryptophan + 2 ATP = brevianamide F + 2 AMP + 2 diphosphate + 2 H(+). It participates in mycotoxin biosynthesis. Nonribosomal peptide synthetase; part of the gene cluster that mediates the biosynthesis of fumitremorgins, indole alkaloids that carry not only intriguing chemical structures, but also interesting biological and pharmacological activities. The biosynthesis of fumitremorgin-type alkaloids begins by condensation of the two amino acids L-tryptophan and L-proline to brevianamide F, catalyzed by the non-ribosomal peptide synthetase ftmA. Brevianamide F is then prenylated by the prenyltransferase ftmPT1/ftmB in the presence of dimethylallyl diphosphate, resulting in the formation of tryprostatin B. The three cytochrome P450 monooxygenases, ftmP450-1/ftmC, ftmP450-2/ftmE and ftmP450-3/FtmG, are responsible for the conversion of tryprostatin B to 6-hydroxytryprostatin B, tryprostatin A to fumitremorgin C and fumitremorgin C to 12,13-dihydroxyfumitremorgin C, respectively. The putative methyltransferase ftmMT/ftmD is expected for the conversion of 6-hydroxytryprostatin B to tryprostatin A. FtmPT2/FtmH catalyzes the prenylation of 12,13-dihydroxyfumitre-morgin C in the presence of dimethylallyl diphosphate, resulting in the formation of fumitremorgin B. Fumitremorgin B is further converted to verruculogen by ftmOx1/ftmF via the insertion of an endoperoxide bond between the two prenyl moieties. In some fungal species, verruculogen is further converted to fumitremorgin A, but the enzymes involved in this step have not been identified yet. The polypeptide is Nonribosomal peptide synthetase 13 (Aspergillus fumigatus (Neosartorya fumigata)).